A 291-amino-acid chain; its full sequence is GCN5-related N-acetyltransferase 4, chloroplastic (291 aa).

Residues 1–61 constitute a chloroplast transit peptide; that stretch reads MRSTPLGTTA…PSQINSGACN (61 aa). Positions 76–280 constitute an N-acetyltransferase domain; that stretch reads IVVREARLED…RFTFMMKLVN (205 aa). Acetyl-CoA is bound by residues 199-201 and 207-212; these read VAV and RKGIAK. The residue at position 217 (lysine 217) is an N6-acetyllysine. Acetyl-CoA is bound by residues 238–240 and tyrosine 245; that span reads NLG. Tyrosine 245 (proton donor) is an active-site residue. Lysine 254 and lysine 265 each carry N6-acetyllysine.

This sequence belongs to the acetyltransferase family. GNAT subfamily. As to quaternary structure, oligomer. Post-translationally, autoacetylated at K-217, K-254 and K-265. As to expression, expressed in green tissues.

Its subcellular location is the plastid. The protein localises to the chloroplast. It catalyses the reaction an N-terminal L-alpha-aminoacyl-[protein] + acetyl-CoA = N-terminal N(alpha)-acetyl-L-alpha-aminoacyl-[protein] + CoA + H(+). It carries out the reaction L-lysyl-[protein] + acetyl-CoA = N(6)-acetyl-L-lysyl-[protein] + CoA + H(+). The enzyme catalyses N-terminal L-alanyl-[protein] + acetyl-CoA = N-terminal N(alpha)-acetyl-L-alanyl-[protein] + CoA + H(+). The catalysed reaction is N-terminal L-seryl-[protein] + acetyl-CoA = N-terminal N(alpha)-acetyl-L-seryl-[protein] + CoA + H(+). It catalyses the reaction N-terminal L-threonyl-[protein] + acetyl-CoA = N-terminal N(alpha)-acetyl-L-threonyl-[protein] + CoA + H(+). It carries out the reaction N-terminal L-methionyl-[protein] + acetyl-CoA = N-terminal N(alpha)-acetyl-L-methionyl-[protein] + CoA + H(+). The enzyme catalyses N-terminal L-valyl-[protein] + acetyl-CoA = N-terminal N(alpha)-acetyl-L-valyl-[protein] + CoA + H(+). The catalysed reaction is N-terminal glycyl-[protein] + acetyl-CoA = N-terminal N(alpha)-acetylglycyl-[protein] + CoA + H(+). Its function is as follows. Protein acetyltransferase with dual specificity triggering both N-alpha-acetylation (NTA), with a large spectrum of modified N-termini, including methionine, alanine, serine, threonine and to a lower extent glycine and valine as substrates, and epsilon-lysine acetylation (KA) of several plastid proteins. The chain is GCN5-related N-acetyltransferase 4, chloroplastic from Arabidopsis thaliana (Mouse-ear cress).